Here is a 152-residue protein sequence, read N- to C-terminus: Ribosome maturation factor RimP (152 aa).

The protein belongs to the RimP family.

The protein localises to the cytoplasm. In terms of biological role, required for maturation of 30S ribosomal subunits. The polypeptide is Ribosome maturation factor RimP (Yersinia enterocolitica serotype O:8 / biotype 1B (strain NCTC 13174 / 8081)).